The chain runs to 297 residues: Dehydrodolichyl diphosphate synthase complex subunit Nus1 (297 aa).

2 consecutive transmembrane segments (helical) span residues 7-26 (LVWR…TSWL) and 40-56 (CCRA…GFTL). The span at 63-73 (GRNRRHHRHPH) shows a compositional bias: basic residues. The interval 63 to 86 (GRNRRHHRHPHGGPGPGPGPAATH) is disordered. Residues 121–139 (IASLVVWCMAVGISYISVY) traverse the membrane as a helical segment. N-linked (GlcNAc...) asparagine glycosylation is found at N148 and N275. The RXG motif; crucial for prenyltransferase activity motif lies at 294-296 (RLG). 2 residues coordinate isopentenyl diphosphate: L295 and G296.

This sequence belongs to the UPP synthase family. The active dehydrodolichyl diphosphate synthase complex is a heterotetramer composed of a dimer of heterodimer of DHDDS and NUS1. Interacts with NPC2. Requires Mg(2+) as cofactor. As to expression, highly expressed in heart, liver, kidney and pancreas.

It is found in the endoplasmic reticulum membrane. The enzyme catalyses n isopentenyl diphosphate + (2E,6E)-farnesyl diphosphate = a di-trans,poly-cis-polyprenyl diphosphate + n diphosphate. Its pathway is protein modification; protein glycosylation. It participates in lipid metabolism. In terms of biological role, with DHDDS, forms the dehydrodolichyl diphosphate synthase (DDS) complex, an essential component of the dolichol monophosphate (Dol-P) biosynthetic machinery. Both subunits contribute to enzymatic activity, i.e. condensation of multiple copies of isopentenyl pyrophosphate (IPP) to farnesyl pyrophosphate (FPP) to produce dehydrodolichyl diphosphate (Dedol-PP), a precursor of dolichol phosphate which is utilized as a sugar carrier in protein glycosylation in the endoplasmic reticulum (ER). Synthesizes long-chain polyprenols, mostly of C95 and C100 chain length. Regulates the glycosylation and stability of nascent NPC2, thereby promoting trafficking of LDL-derived cholesterol. Acts as a specific receptor for the N-terminus of Nogo-B, a neural and cardiovascular regulator. The chain is Dehydrodolichyl diphosphate synthase complex subunit Nus1 from Mus musculus (Mouse).